A 1116-amino-acid chain; its full sequence is Protein translocase subunit SecA (1116 aa).

Residues Gln177, 195–199 (GEGKT), and Asp692 contribute to the ATP site.

This sequence belongs to the SecA family. Monomer and homodimer. Part of the essential Sec protein translocation apparatus which comprises SecA, SecYEG and auxiliary proteins SecDF. Other proteins may also be involved.

It is found in the cell inner membrane. The protein localises to the cytoplasm. It carries out the reaction ATP + H2O + cellular proteinSide 1 = ADP + phosphate + cellular proteinSide 2.. Functionally, part of the Sec protein translocase complex. Interacts with the SecYEG preprotein conducting channel. Has a central role in coupling the hydrolysis of ATP to the transfer of proteins into and across the cell membrane, serving as an ATP-driven molecular motor driving the stepwise translocation of polypeptide chains across the membrane. The chain is Protein translocase subunit SecA from Flavobacterium psychrophilum (strain ATCC 49511 / DSM 21280 / CIP 103535 / JIP02/86).